The following is a 122-amino-acid chain: MSRKKKPLMSARGKPIRYKVHVKKGDTVQIIAGKDKGKVGEVLKVLPKVSKVIVKDVNIITKHVKPQQEGESGKIVTTEAPIHSSNVMLYSTKQKVASRICYTFTDDGRKVRMLKKTGEVID.

Belongs to the universal ribosomal protein uL24 family. As to quaternary structure, part of the 50S ribosomal subunit.

One of two assembly initiator proteins, it binds directly to the 5'-end of the 23S rRNA, where it nucleates assembly of the 50S subunit. In terms of biological role, one of the proteins that surrounds the polypeptide exit tunnel on the outside of the subunit. In Trichodesmium erythraeum (strain IMS101), this protein is Large ribosomal subunit protein uL24.